The chain runs to 253 residues: 1-(5-phosphoribosyl)-5-[(5-phosphoribosylamino)methylideneamino] imidazole-4-carboxamide isomerase (253 aa).

Asp8 functions as the Proton acceptor in the catalytic mechanism. Catalysis depends on Asp131, which acts as the Proton donor.

This sequence belongs to the HisA/HisF family.

The protein resides in the cytoplasm. It carries out the reaction 1-(5-phospho-beta-D-ribosyl)-5-[(5-phospho-beta-D-ribosylamino)methylideneamino]imidazole-4-carboxamide = 5-[(5-phospho-1-deoxy-D-ribulos-1-ylimino)methylamino]-1-(5-phospho-beta-D-ribosyl)imidazole-4-carboxamide. It participates in amino-acid biosynthesis; L-histidine biosynthesis; L-histidine from 5-phospho-alpha-D-ribose 1-diphosphate: step 4/9. The sequence is that of 1-(5-phosphoribosyl)-5-[(5-phosphoribosylamino)methylideneamino] imidazole-4-carboxamide isomerase from Polynucleobacter asymbioticus (strain DSM 18221 / CIP 109841 / QLW-P1DMWA-1) (Polynucleobacter necessarius subsp. asymbioticus).